A 458-amino-acid chain; its full sequence is Serine--tRNA ligase (458 aa).

252 to 254 contributes to the L-serine binding site; that stretch reads TAE. Residues 283–285 and valine 299 contribute to the ATP site; that span reads RKE. Glutamate 306 is a binding site for L-serine. An ATP-binding site is contributed by 370 to 373; it reads EMVS. L-serine is bound at residue threonine 405.

It belongs to the class-II aminoacyl-tRNA synthetase family. Type-1 seryl-tRNA synthetase subfamily. As to quaternary structure, homodimer. The tRNA molecule binds across the dimer.

The protein localises to the cytoplasm. It catalyses the reaction tRNA(Ser) + L-serine + ATP = L-seryl-tRNA(Ser) + AMP + diphosphate + H(+). The enzyme catalyses tRNA(Sec) + L-serine + ATP = L-seryl-tRNA(Sec) + AMP + diphosphate + H(+). Its pathway is aminoacyl-tRNA biosynthesis; selenocysteinyl-tRNA(Sec) biosynthesis; L-seryl-tRNA(Sec) from L-serine and tRNA(Sec): step 1/1. Functionally, catalyzes the attachment of serine to tRNA(Ser). Is also able to aminoacylate tRNA(Sec) with serine, to form the misacylated tRNA L-seryl-tRNA(Sec), which will be further converted into selenocysteinyl-tRNA(Sec). The chain is Serine--tRNA ligase from Sulfolobus acidocaldarius (strain ATCC 33909 / DSM 639 / JCM 8929 / NBRC 15157 / NCIMB 11770).